The following is a 432-amino-acid chain: Ubiquitin-like modifier-activating enzyme 5 (432 aa).

Positions 25–47 (ETKKNQTPSVLKGPTVSQERPSA) are disordered. The segment covering 29–44 (NQTPSVLKGPTVSQER) has biased composition (polar residues). Residues glycine 96, aspartate 117, lysine 140, asparagine 163, and asparagine 196 each contribute to the ATP site. The Zn(2+) site is built by cysteine 238 and cysteine 241. The active-site Glycyl thioester intermediate is the cysteine 262. Zn(2+) is bound by residues cysteine 315 and cysteine 320. Residues 363–406 (DTTEAPSSSAATEVAPGLKFAYEPTQTPKKNSSDNLKLSPSQAV) form a disordered region. Residues 386–406 (PTQTPKKNSSDNLKLSPSQAV) show a composition bias toward polar residues.

The protein belongs to the ubiquitin-activating E1 family. UBA5 subfamily. In terms of assembly, interacts with ufc-1.

E1-like enzyme which activates ufm-1. Required for interaction between ufm-1 and ufc-1. In Caenorhabditis briggsae, this protein is Ubiquitin-like modifier-activating enzyme 5.